A 254-amino-acid polypeptide reads, in one-letter code: Ciliary microtubule associated protein 1A (254 aa).

2 STPGR repeats span residues 180–205 (PGPAAYRQTDVRVTKFKAPQYTMAAR) and 216–241 (PGPGAHSPEKVTLTKPCAPVVTFGIK). The tract at residues 207–226 (EPPGDKTLKPGPGAHSPEKV) is disordered.

This sequence belongs to the CIMAP family. In terms of assembly, microtubule inner protein component of sperm flagellar doublet microtubules. In terms of tissue distribution, testis-specific.

The protein resides in the cytoplasm. It localises to the cytoskeleton. It is found in the flagellum axoneme. In terms of biological role, outer dense fibers are filamentous structures located on the outside of the axoneme in the midpiece and principal piece of the mammalian sperm tail. May help to maintain the passive elastic structures and elastic recoil of the sperm tail. The chain is Ciliary microtubule associated protein 1A from Homo sapiens (Human).